A 264-amino-acid chain; its full sequence is Ribosomal RNA small subunit methyltransferase A (264 aa).

Positions 12, 14, 39, 60, 83, and 103 each coordinate S-adenosyl-L-methionine.

This sequence belongs to the class I-like SAM-binding methyltransferase superfamily. rRNA adenine N(6)-methyltransferase family. RsmA subfamily.

The protein resides in the cytoplasm. It catalyses the reaction adenosine(1518)/adenosine(1519) in 16S rRNA + 4 S-adenosyl-L-methionine = N(6)-dimethyladenosine(1518)/N(6)-dimethyladenosine(1519) in 16S rRNA + 4 S-adenosyl-L-homocysteine + 4 H(+). Specifically dimethylates two adjacent adenosines (A1518 and A1519) in the loop of a conserved hairpin near the 3'-end of 16S rRNA in the 30S particle. May play a critical role in biogenesis of 30S subunits. The polypeptide is Ribosomal RNA small subunit methyltransferase A (Syntrophotalea carbinolica (strain DSM 2380 / NBRC 103641 / GraBd1) (Pelobacter carbinolicus)).